A 126-amino-acid chain; its full sequence is Probable 4-amino-4-deoxy-L-arabinose-phosphoundecaprenol flippase subunit ArnF (126 aa).

The Cytoplasmic segment spans residues methionine 1–tyrosine 4. The helical transmembrane segment at isoleucine 5–valine 25 threads the bilayer. The Periplasmic segment spans residues valine 26–serine 49. The chain crosses the membrane as a helical span at residues leucine 50–threonine 70. Topologically, residues leucine 71–alanine 79 are cytoplasmic. Residues tyrosine 80–phenylalanine 100 traverse the membrane as a helical segment. Over asparagine 101–glutamate 102 the chain is Periplasmic. Residues threonine 103–serine 123 traverse the membrane as a helical segment. Topologically, residues arginine 124–glutamate 126 are cytoplasmic.

The protein belongs to the ArnF family. As to quaternary structure, heterodimer of ArnE and ArnF.

It localises to the cell inner membrane. It functions in the pathway bacterial outer membrane biogenesis; lipopolysaccharide biosynthesis. Its function is as follows. Translocates 4-amino-4-deoxy-L-arabinose-phosphoundecaprenol (alpha-L-Ara4N-phosphoundecaprenol) from the cytoplasmic to the periplasmic side of the inner membrane. The polypeptide is Probable 4-amino-4-deoxy-L-arabinose-phosphoundecaprenol flippase subunit ArnF (Photorhabdus laumondii subsp. laumondii (strain DSM 15139 / CIP 105565 / TT01) (Photorhabdus luminescens subsp. laumondii)).